We begin with the raw amino-acid sequence, 520 residues long: GMP synthase [glutamine-hydrolyzing] (520 aa).

A Glutamine amidotransferase type-1 domain is found at 12–205 (KIIVLDYGSQ…AISICGARGD (194 aa)). Cysteine 89 functions as the Nucleophile in the catalytic mechanism. Catalysis depends on residues histidine 179 and glutamate 181. The 190-residue stretch at 206–395 (WSMDNFIDME…LGMPEEIVWR (190 aa)) folds into the GMPS ATP-PPase domain. 233 to 239 (SGGVDSS) provides a ligand contact to ATP.

Homodimer.

The catalysed reaction is XMP + L-glutamine + ATP + H2O = GMP + L-glutamate + AMP + diphosphate + 2 H(+). It functions in the pathway purine metabolism; GMP biosynthesis; GMP from XMP (L-Gln route): step 1/1. Its function is as follows. Catalyzes the synthesis of GMP from XMP. The chain is GMP synthase [glutamine-hydrolyzing] from Streptococcus pyogenes serotype M6 (strain ATCC BAA-946 / MGAS10394).